The chain runs to 304 residues: MITASPQEIAHKLGSGLLSFPVTHFTDDHSFDEAAYRENIGWLGQFDASGLFAAGGTGEFFSLTPPEVEQVVRAAVQEAPDGLPVIAPAGYGTATAVQMARSAESAGAHGILLLPPYLTEASQDGLVAHVKEVCAATTLGVTIYSRANAVYTEAAVAELADSCPNLVGFKDGVGNIEQMTRIYASLGDRLTYVGGLPTAEMFALPYLALGVTTYSSAIYNFVPQFALDFYNALRSGDNAFVVNALNDFVIPYCNLRNKKQGYAVSIIKAGMKVIDRPAGPVRPPLTDLDAVELAELADLIKKVS.

Belongs to the DapA family.

It catalyses the reaction 5-dehydro-4-deoxy-D-glucarate + H(+) = 2,5-dioxopentanoate + CO2 + H2O. It participates in carbohydrate acid metabolism; D-glucarate degradation; 2,5-dioxopentanoate from D-glucarate: step 2/2. This is Probable 5-dehydro-4-deoxyglucarate dehydratase from Rhodococcus opacus (strain B4).